A 115-amino-acid polypeptide reads, in one-letter code: NAD(P)H-quinone oxidoreductase subunit M (115 aa).

The protein belongs to the complex I NdhM subunit family. NDH-1 can be composed of about 15 different subunits; different subcomplexes with different compositions have been identified which probably have different functions.

It is found in the cellular thylakoid membrane. It carries out the reaction a plastoquinone + NADH + (n+1) H(+)(in) = a plastoquinol + NAD(+) + n H(+)(out). The enzyme catalyses a plastoquinone + NADPH + (n+1) H(+)(in) = a plastoquinol + NADP(+) + n H(+)(out). In terms of biological role, NDH-1 shuttles electrons from an unknown electron donor, via FMN and iron-sulfur (Fe-S) centers, to quinones in the respiratory and/or the photosynthetic chain. The immediate electron acceptor for the enzyme in this species is believed to be plastoquinone. Couples the redox reaction to proton translocation, and thus conserves the redox energy in a proton gradient. Cyanobacterial NDH-1 also plays a role in inorganic carbon-concentration. This Trichodesmium erythraeum (strain IMS101) protein is NAD(P)H-quinone oxidoreductase subunit M.